Reading from the N-terminus, the 181-residue chain is BURP domain-containing protein 7 (181 aa).

A signal peptide spans 1 to 21 (MARSLAALLLLLVAAAGDSHA). Positions 65-181 (FFLEKDLFPG…RRGRRTGWRP (117 aa)) constitute a BURP domain. The disordered stretch occupies residues 112-181 (QLSVPAGSPA…RRGRRTGWRP (70 aa)). Residues 128–143 (RPRRSPARRSNARRRS) show a composition bias toward basic residues. Residues 144 to 157 (SPWWSSPRPASAPA) are compositionally biased toward low complexity. Over residues 170 to 181 (GRRRGRRTGWRP) the composition is skewed to basic residues.

Expressed in roots, stems, leaves and shoot.

This chain is BURP domain-containing protein 7 (BURP7), found in Oryza sativa subsp. japonica (Rice).